The chain runs to 84 residues: Sulfur carrier protein TusA (84 aa).

The Cysteine persulfide intermediate role is filled by C21.

Belongs to the sulfur carrier protein TusA family.

The protein localises to the cytoplasm. Its function is as follows. Sulfur carrier protein which probably makes part of a sulfur-relay system. In Pseudomonas syringae pv. tomato (strain ATCC BAA-871 / DC3000), this protein is Sulfur carrier protein TusA.